The primary structure comprises 1641 residues: Maestro heat-like repeat-containing protein family member 1 (1641 aa).

HEAT repeat units lie at residues 3-41, 159-198, 344-382, 385-423, 1048-1086, 1358-1396, and 1605-1641; these read ESSMKKLASTLLDAITDKDPLVQEQVCSALCSLGEARPV, VPFLPSVLSSLLPVLGVAKQDTVRVAFCSALQRFSEGALE, CSSPDRLLAFLLPRLDTSNERTRVGTLQVVRHVINSAAA, EDKKPFILSSMRLPLLDTNSKVKRAVVQVISAMAHHGYL, PDQLISLLLTMFEALGDPEKNCSRAATVMINCLLQERGG, LMLLDSLLESLAARQKDTCASVRRLVLRGLANLASGCPD, and QVDLDQLIAALQILLKDPAPEVRTRAAEALGRLVKLA.

It belongs to the MROH1 family. As to quaternary structure, homooligomer; homooligomerizes at lysosome scission sites.

The protein localises to the lysosome membrane. In terms of biological role, lysosome fission factor. Recruited to lysosomes by RAB7 (RAB7A or RAB7B) at scission sites and homooligomerizes to mediate the constriction and scission of lysosomal tubules. May sever membranes by inserting amphipathic helices into one bilayer leaflet. Lysosome fission is required to maintain their steady-state number, shape, size, composition and function, and to accomplish regeneration. The sequence is that of Maestro heat-like repeat-containing protein family member 1 from Homo sapiens (Human).